Reading from the N-terminus, the 360-residue chain is Phosphoserine aminotransferase (360 aa).

Arginine 41 contributes to the L-glutamate binding site. Residues tryptophan 101, threonine 152, aspartate 172, and glutamine 195 each contribute to the pyridoxal 5'-phosphate site. Position 196 is an N6-(pyridoxal phosphate)lysine (lysine 196). 237-238 is a pyridoxal 5'-phosphate binding site; sequence NT.

This sequence belongs to the class-V pyridoxal-phosphate-dependent aminotransferase family. SerC subfamily. As to quaternary structure, homodimer. Requires pyridoxal 5'-phosphate as cofactor.

It localises to the cytoplasm. It carries out the reaction O-phospho-L-serine + 2-oxoglutarate = 3-phosphooxypyruvate + L-glutamate. It catalyses the reaction 4-(phosphooxy)-L-threonine + 2-oxoglutarate = (R)-3-hydroxy-2-oxo-4-phosphooxybutanoate + L-glutamate. Its pathway is amino-acid biosynthesis; L-serine biosynthesis; L-serine from 3-phospho-D-glycerate: step 2/3. It participates in cofactor biosynthesis; pyridoxine 5'-phosphate biosynthesis; pyridoxine 5'-phosphate from D-erythrose 4-phosphate: step 3/5. Catalyzes the reversible conversion of 3-phosphohydroxypyruvate to phosphoserine and of 3-hydroxy-2-oxo-4-phosphonooxybutanoate to phosphohydroxythreonine. The sequence is that of Phosphoserine aminotransferase from Burkholderia orbicola (strain MC0-3).